The following is a 367-amino-acid chain: Quinolinate synthase (367 aa).

The iminosuccinate site is built by His-45 and Ser-62. Cys-109 is a [4Fe-4S] cluster binding site. Iminosuccinate-binding positions include 140-142 (YVN) and Ser-161. Cys-229 is a [4Fe-4S] cluster binding site. Iminosuccinate contacts are provided by residues 255-257 (HPE) and Thr-272. Cys-319 provides a ligand contact to [4Fe-4S] cluster.

This sequence belongs to the quinolinate synthase family. Type 3 subfamily. It depends on [4Fe-4S] cluster as a cofactor.

It localises to the cytoplasm. The enzyme catalyses iminosuccinate + dihydroxyacetone phosphate = quinolinate + phosphate + 2 H2O + H(+). Its pathway is cofactor biosynthesis; NAD(+) biosynthesis; quinolinate from iminoaspartate: step 1/1. In terms of biological role, catalyzes the condensation of iminoaspartate with dihydroxyacetone phosphate to form quinolinate. The protein is Quinolinate synthase of Halalkalibacterium halodurans (strain ATCC BAA-125 / DSM 18197 / FERM 7344 / JCM 9153 / C-125) (Bacillus halodurans).